A 240-amino-acid polypeptide reads, in one-letter code: Large ribosomal subunit protein uL2 (240 aa).

Polar residues predominate over residues 1 to 11 (MGKRLISQNRG). Disordered regions lie at residues 1–31 (MGKR…VKYR) and 206–240 (GGGR…TGRK). 2 stretches are compositionally biased toward basic residues: residues 13-28 (GTPK…KGAV) and 224-240 (SPGR…TGRK).

It belongs to the universal ribosomal protein uL2 family. As to quaternary structure, part of the 50S ribosomal subunit. Forms a bridge to the 30S subunit in the 70S ribosome.

In terms of biological role, one of the primary rRNA binding proteins. Required for association of the 30S and 50S subunits to form the 70S ribosome, for tRNA binding and peptide bond formation. It has been suggested to have peptidyltransferase activity; this is somewhat controversial. Makes several contacts with the 16S rRNA in the 70S ribosome. In Methanococcus maripaludis (strain C6 / ATCC BAA-1332), this protein is Large ribosomal subunit protein uL2.